A 144-amino-acid polypeptide reads, in one-letter code: Large ribosomal subunit protein uL11 (144 aa).

The protein belongs to the universal ribosomal protein uL11 family. As to quaternary structure, part of the ribosomal stalk of the 50S ribosomal subunit. Interacts with L10 and the large rRNA to form the base of the stalk. L10 forms an elongated spine to which L12 dimers bind in a sequential fashion forming a multimeric L10(L12)X complex. Contacts the CTC protein (RL25). One or more lysine residues are methylated.

Functionally, forms part of the ribosomal stalk which helps the ribosome interact with GTP-bound translation factors. The polypeptide is Large ribosomal subunit protein uL11 (Deinococcus radiodurans (strain ATCC 13939 / DSM 20539 / JCM 16871 / CCUG 27074 / LMG 4051 / NBRC 15346 / NCIMB 9279 / VKM B-1422 / R1)).